The following is a 627-amino-acid chain: Coiled-coil domain-containing protein 22 (627 aa).

Residues 1 to 321 (MEEADRILIH…VADIPAASQR (321 aa)) are sufficient for interaction with COMMD1. A sufficicient and required for interaction with CCDC93 region spans residues 1-447 (MEEADRILIH…LQDCRELESS (447 aa)). The stretch at 321–384 (RPEQDTRAAQ…SVAEQEQALR (64 aa)) forms a coiled coil. Phosphoserine is present on Ser-410. Positions 448 to 535 (RRLVEIQELH…NSLSGKLDRT (88 aa)) form a coiled coil.

Belongs to the CCDC22 family. In terms of assembly, component of the commander complex consisting of the CCC subcomplex and the retriever subcomplex. Component of the CCC (COMMD/CCDC22/CCDC93) subcomplex consisting of COMMD1, COMMD2, COMMD3, COMMD4, COMMD5, COMMD6, COMMD7, COMMD8, COMMD9, COMMD10, CCDC22 and CCDC93. Forms a coiled-coil heterodimer with CCDC22; this heterodimer interacts with the guanine nucleotide exchange factor DENND10; the interaction is direct. Interacts with CUL1, CUL2, CUL3, SKP1, BTRC. Interacts with SNX17 and SNX31. Interacts with CPNE1 and CPNE4.

The protein resides in the endosome. It is found in the cytoplasm. It localises to the cytoskeleton. Its subcellular location is the microtubule organizing center. The protein localises to the centrosome. In terms of biological role, component of the commander complex that is essential for endosomal recycling of transmembrane cargos; the Commander complex is composed of composed of the CCC subcomplex and the retriever subcomplex. Component of the CCC complex, which is involved in the regulation of endosomal recycling of surface proteins, including integrins, signaling receptor and channels. Involved in regulation of NF-kappa-B signaling. Promotes ubiquitination of I-kappa-B-kinase subunit IKBKB and its subsequent proteasomal degradation leading to NF-kappa-B activation; the function may involve association with COMMD8 and a CUL1-dependent E3 ubiquitin ligase complex. May down-regulate NF-kappa-B activity via association with COMMD1 and involving a CUL2-dependent E3 ubiquitin ligase complex. Regulates the cellular localization of COMM domain-containing proteins, such as COMMD1 and COMMD10. Component of the CCC complex, which is involved in the regulation of endosomal recycling of surface proteins, including integrins, signaling receptor and channels. The CCC complex associates with SNX17, retriever and WASH complexes to prevent lysosomal degradation and promote cell surface recycling of numerous cargos such as integrins ITGA5:ITGB1. Plays a role in copper ion homeostasis. Involved in copper-dependent ATP7A trafficking between the trans-Golgi network and vesicles in the cell periphery; the function is proposed to depend on its association within the CCC complex and cooperation with the WASH complex on early endosomes. This is Coiled-coil domain-containing protein 22 from Rattus norvegicus (Rat).